A 209-amino-acid polypeptide reads, in one-letter code: Uracil phosphoribosyltransferase (209 aa).

5-phospho-alpha-D-ribose 1-diphosphate is bound by residues arginine 79, arginine 104, and aspartate 131–serine 139. Uracil is bound by residues isoleucine 194 and glycine 199–alanine 201. Residue aspartate 200 coordinates 5-phospho-alpha-D-ribose 1-diphosphate.

The protein belongs to the UPRTase family. Mg(2+) is required as a cofactor.

It carries out the reaction UMP + diphosphate = 5-phospho-alpha-D-ribose 1-diphosphate + uracil. Its pathway is pyrimidine metabolism; UMP biosynthesis via salvage pathway; UMP from uracil: step 1/1. Its activity is regulated as follows. Allosterically activated by GTP. In terms of biological role, catalyzes the conversion of uracil and 5-phospho-alpha-D-ribose 1-diphosphate (PRPP) to UMP and diphosphate. The chain is Uracil phosphoribosyltransferase from Caulobacter vibrioides (strain ATCC 19089 / CIP 103742 / CB 15) (Caulobacter crescentus).